The chain runs to 323 residues: MNGDELPFESGFEVYAKGTHKSEFDSNLLDPRSDPIWDAIREEAKLEAEKEPILSSFLYAGILAHDCLEQALGFVLANRLQNPTLLATQLLDIFYGVMMHDKGIQSSIRHDLQAFKDRDPACLSYSSAILHLKGYHALQAYRVAHKLWNEGRKLLALALQSRISEVFGIDIHPAARIGEGILLDHGTGVVIGETAVIGNGVSILHGVTLGGTGKETGDRHPKIGEGALLGACVTILGNISIGAGAMVAAGSLVLKDVPSHSVVAGNPAKLIRVMEEQDPSLAMKHDATKEFFRHVADGYKGAQSNGPSLSAGDTEKGHTNSTS.

Residues 302–323 form a disordered region; that stretch reads AQSNGPSLSAGDTEKGHTNSTS. Residues 313-323 are compositionally biased toward basic and acidic residues; the sequence is DTEKGHTNSTS.

The protein belongs to the transferase hexapeptide repeat family. As to quaternary structure, homomultimer. Ubiquitously expressed at low levels. Localized in vascular tissues, particularly in phloem.

It is found in the cytoplasm. It carries out the reaction L-serine + acetyl-CoA = O-acetyl-L-serine + CoA. The protein operates within amino-acid biosynthesis; L-cysteine biosynthesis; L-cysteine from L-serine: step 1/2. The chain is Serine acetyltransferase 2 from Arabidopsis thaliana (Mouse-ear cress).